The primary structure comprises 331 residues: UPF0194 membrane protein YbhG (331 aa).

An N-terminal signal peptide occupies residues 1 to 15 (MKKPVVIGLAVVVLA). The stretch at 107–208 (EEIAQAAAAV…LNLQDSTLIA (102 aa)) forms a coiled coil.

The protein belongs to the UPF0194 family.

Its subcellular location is the periplasm. In Escherichia coli O157:H7 (strain EC4115 / EHEC), this protein is UPF0194 membrane protein YbhG.